The chain runs to 164 residues: MTEFTHINQQGHAKMVDVSDKQITKRTAVAHSSITVNETIYKQISNNTNTKGNVLNTAQIAGIMAAKNTSTIIPMCHPLPLTGIDVHFSWDETNAPLYTLNIQTTVSTTGKTGVEMEALTAASATALTIYDMTKAVDKGMIIGETYLESKSGGKSGDFQRQSGQ.

Residues Met75–His77 and Met116–Glu117 each bind substrate. Asp131 is a catalytic residue.

The protein belongs to the MoaC family. Homohexamer; trimer of dimers.

The catalysed reaction is (8S)-3',8-cyclo-7,8-dihydroguanosine 5'-triphosphate = cyclic pyranopterin phosphate + diphosphate. It participates in cofactor biosynthesis; molybdopterin biosynthesis. Its function is as follows. Catalyzes the conversion of (8S)-3',8-cyclo-7,8-dihydroguanosine 5'-triphosphate to cyclic pyranopterin monophosphate (cPMP). The sequence is that of Cyclic pyranopterin monophosphate synthase from Staphylococcus aureus (strain bovine RF122 / ET3-1).